The chain runs to 312 residues: Mevalonate kinase (312 aa).

104 to 114 lines the ATP pocket; sequence PISCGLGSSAS. The active-site Proton acceptor is the Asp-155.

This sequence belongs to the GHMP kinase family. Mevalonate kinase subfamily. Homodimer. It depends on Mg(2+) as a cofactor.

It localises to the cytoplasm. It catalyses the reaction (R)-mevalonate + ATP = (R)-5-phosphomevalonate + ADP + H(+). The protein operates within isoprenoid biosynthesis; isopentenyl diphosphate biosynthesis via mevalonate pathway; isopentenyl diphosphate from (R)-mevalonate: step 1/3. Farnesyl- and geranyl-pyrophosphates are competitive inhibitors. Slightly inhibited by high concentration of ATP. Its function is as follows. Catalyzes the phosphorylation of (R)-mevalonate (MVA) to (R)-mevalonate 5-phosphate (MVAP). Functions in the mevalonate (MVA) pathway leading to isopentenyl diphosphate (IPP), a key precursor for the biosynthesis of isoprenoid compounds such as archaeal membrane lipids. This Methanocaldococcus jannaschii (strain ATCC 43067 / DSM 2661 / JAL-1 / JCM 10045 / NBRC 100440) (Methanococcus jannaschii) protein is Mevalonate kinase.